The following is a 1883-amino-acid chain: MPVGRIECPSSPSFPRDISHECRVCGVTEVGLSAYAKHISGQLHKDNVDAQEREDDGKGEEEEEDYFDKELIQLIKQRKEQSRQDEPSNSNQEINSDDRRPQWRREDRIPYQDRESYSQPAWHHRGPPQRDWKWEKDGFNNTRKNSFPHSLRNGGGPRGRSGWHKGVAGGSSTWFHNHSNSGGGWLSNSGAVDWNHNGTGRNSSWLSEGTGGFSSWHMNNSNGNWKSSVRSTNNWNYSGPGDKFQPGRNRNSNCQMEDMTMLWNKKSNKSNKYSHDRYNWQRQENDKLGTVATYRGPSEGFTSDKFPSEGLLDFNFEQLESQTTKQADTATSKVSGKNGSAAREKPRRWTPYPSQKTLDLQSGLKDITGNKSEMIEKPLFDFSLITTGIQEPQTDETRNSPTQKTQKEIHTGSLNHKASSDSAASFEVVRQCPTAEKPEQEHTPNKMPSLKSPLLPCPATKSLSQKQDPKNISKNTKTNFFSPGEHSNPSNKPTVEDNHGPYISKLRSSCPHVLKGNKSTFGSQKQSGDNLNDTLRKAKEVLQCHESLQNPLLSTSKSTRNYAKASRNVEESEKGSLKIEFQVHALEDESDGETSDTEKHGTKIGTLGSATTELLSGSTRTADEKEEDDRILKTSRELSTSPCNPIVRQKESELQMTSAASPHPGLLLDLKTSLEDAQVDDSIKSHVSYETEGFESASLDAELQKSDISQPSGPLLPELSKLGFPASLQRDLTRHISLKSKTGVHLPEPNLNSARRIRNISGHRKSETEKESGLKPTLRQILNASRRNVNWEQVIQQVTKKKQELGKGLPRFGIEMVPLVQNEQEALDLDGEPDLSSLEGFQWEGVSISSSPGLARKRSLSESSVIMDRAPSVYSFFSEEGTGKENEPQQMVSPSNSLRAGQSQKATMHLKQEVTPRAASLRTGERAENVATQRRHSAQLSSDHIIPLMHLAKDLNSQERSIPPSENQNSQESNGEGNCLSSSASSALAISSLADAATDSSCTSGAEQNDGQSIRKKRRATGDGSSPELPSLERKNKRRKIKGKKERSQVDQLLNISLREEELSKSLQCMDNNLLQARAALQTAYVEVQRLLMLKQQITMEMSALRTHRIQILQGLQETYEPSEHPDQVPCSLTRERRNSRSQTSIDAALLPTPFFPLFLEPPSSHVSPSPTGASLQITTSPTFQTHGSVPAPDSSVQIKQEPMSPEQDENVNAVPPSSACNVSKELLEANREISDSCPVYPVITARLSLPESTESFHEPSQELKFSVEQRNTRNRENSPSSQSAGLSSINKEGEEPTKGNSGSEACTSSFLRLSFASETPLEKEPHSPADQPEQQAESTLTSAETRGSKKKKKLRKKKSLRAAHVPENSDTEQDVLTVKPVRKVKAGKLIKGGKVTTSTWEDSRTGREQESVRDEPDSDSSLEVLEIPNPQLEVVAIDSSESGEEKPDSPSKKDIWNSTEQNPLETSRSGCDEVSSTSEIGTRYKDGIPVSVAETQTVISSIKGSKNSSEISSEPGDDDEPTEGSFEGHQAAVNAIQIFGNLLYTCSADKTVRVYNLVSRKCIGVFEGHTSKVNCLLVTQTSGKNAALYTGSSDHTIRCYNVKSRECVEQLQLEDRVLCLHSRWRILYAGLANGTVVTFNIKNNKRLEIFECHGPRAVSCLATAQEGARKLLVVGSYDCTISVRDARNGLLLRTLEGHSKTILCMKVVNDLVFSGSSDQSVHAHNIHTGELVRIYKGHNHAVTVVNILGKVMVTACLDKFVRVYELQSHDRLQVYGGHKDMIMCMTIHKSMIYTGCYDGSIQAVRLNLMQNYRCWWHGCSLIFGVVDHLKQHLLTDHTNPNFQTLKCRWKNCDAFFTARKGSKQDAAGHIERHAEDDSKIDS.

Residues Ile-6 and Lys-37 each participate in a glycyl lysine isopeptide (Lys-Gly) (interchain with G-Cter in SUMO2) cross-link. The C2H2-type 1; atypical zinc-finger motif lies at 20–44 (HECRVCGVTEVGLSAYAKHISGQLH). The disordered stretch occupies residues 39–162 (ISGQLHKDNV…NGGGPRGRSG (124 aa)). Acidic residues predominate over residues 52-67 (EREDDGKGEEEEEDYF). Glycyl lysine isopeptide (Lys-Gly) (interchain with G-Cter in SUMO2) cross-links involve residues Lys-69 and Lys-76. Basic and acidic residues-rich tracts occupy residues 77–86 (QRKEQSRQDE), 96–116 (SDDR…DRES), and 128–138 (PQRDWKWEKDG). Lys-133 participates in a covalent cross-link: Glycyl lysine isopeptide (Lys-Gly) (interchain with G-Cter in SUMO2). Residues 139–148 (FNNTRKNSFP) are compositionally biased toward polar residues. Glycyl lysine isopeptide (Lys-Gly) (interchain with G-Cter in SUMO2) cross-links involve residues Lys-243, Lys-287, and Lys-305. The segment covering 322–338 (QTTKQADTATSKVSGKN) has biased composition (polar residues). A disordered region spans residues 322-356 (QTTKQADTATSKVSGKNGSAAREKPRRWTPYPSQK). Glycyl lysine isopeptide (Lys-Gly) (interchain with G-Cter in SUMO2) cross-links involve residues Lys-356, Lys-365, Lys-371, and Lys-417. The segment at 389–423 (IQEPQTDETRNSPTQKTQKEIHTGSLNHKASSDSA) is disordered. Polar residues predominate over residues 412 to 423 (GSLNHKASSDSA). Phosphoserine is present on Ser-422. Glycyl lysine isopeptide (Lys-Gly) (interchain with G-Cter in SUMO2) cross-links involve residues Lys-451, Lys-461, Lys-477, Lys-492, Lys-505, Lys-515, Lys-525, Lys-539, and Lys-557. The tract at residues 457–501 (CPATKSLSQKQDPKNISKNTKTNFFSPGEHSNPSNKPTVEDNHGP) is disordered. Polar residues predominate over residues 461–493 (KSLSQKQDPKNISKNTKTNFFSPGEHSNPSNKP). Residues 586 to 637 (LEDESDGETSDTEKHGTKIGTLGSATTELLSGSTRTADEKEEDDRILKTSRE) form a disordered region. Ser-590 bears the Phosphoserine mark. Lys-603 is covalently cross-linked (Glycyl lysine isopeptide (Lys-Gly) (interchain with G-Cter in SUMO2)). Positions 608 to 620 (GSATTELLSGSTR) are enriched in polar residues. Phosphoserine occurs at positions 641 and 661. Residues Lys-671, Lys-684, Lys-705, Lys-721, Lys-741, Lys-775, and Lys-807 each participate in a glycyl lysine isopeptide (Lys-Gly) (interchain with G-Cter in SUMO2) cross-link. A phosphoserine mark is found at Ser-859, Ser-861, Ser-864, and Ser-893. Residues 879 to 945 (EEGTGKENEP…HSAQLSSDHI (67 aa)) are disordered. The span at 888–906 (PQQMVSPSNSLRAGQSQKA) shows a compositional bias: polar residues. Glycyl lysine isopeptide (Lys-Gly) (interchain with G-Cter in SUMO2) cross-links involve residues Lys-905 and Lys-911. A Phosphoserine modification is found at Ser-937. Lys-953 participates in a covalent cross-link: Glycyl lysine isopeptide (Lys-Gly) (interchain with G-Cter in SUMO2). The span at 958-976 (QERSIPPSENQNSQESNGE) shows a compositional bias: polar residues. Disordered stretches follow at residues 958–982 (QERS…CLSS), 997–1048 (ATDS…KERS), 1121–1140 (EPSE…RRNS), and 1182–1218 (PTFQ…VPPS). Residue Thr-1021 is modified to Phosphothreonine. Residues Ser-1025, Ser-1026, and Ser-1031 each carry the phosphoserine modification. The segment covering 1035–1045 (KNKRRKIKGKK) has biased composition (basic residues). Ser-1249 is subject to Phosphoserine. The disordered stretch occupies residues 1252–1483 (ESTESFHEPS…EVSSTSEIGT (232 aa)). Residues 1255-1277 (ESFHEPSQELKFSVEQRNTRNRE) are compositionally biased toward basic and acidic residues. Lys-1265 participates in a covalent cross-link: Glycyl lysine isopeptide (Lys-Gly) (interchain with G-Cter in SUMO2). Composition is skewed to polar residues over residues 1278-1291 (NSPS…SSIN) and 1299-1312 (KGNS…SSFL). A phosphoserine mark is found at Ser-1279, Ser-1281, and Ser-1284. Lys-1299 is covalently cross-linked (Glycyl lysine isopeptide (Lys-Gly) (interchain with G-Cter in SUMO2)). Ser-1302 carries the phosphoserine modification. Residue Lys-1324 forms a Glycyl lysine isopeptide (Lys-Gly) (interchain with G-Cter in SUMO2) linkage. Residue Ser-1328 is modified to Phosphoserine. A compositionally biased stretch (polar residues) spans 1333–1346 (PEQQAESTLTSAET). Over residues 1349–1362 (SKKKKKLRKKKSLR) the composition is skewed to basic residues. Ser-1370 bears the Phosphoserine mark. A Phosphothreonine modification is found at Thr-1372. Residues Lys-1380, Lys-1392, and Lys-1395 each participate in a glycyl lysine isopeptide (Lys-Gly) (interchain with G-Cter in SUMO2) cross-link. 2 stretches are compositionally biased toward basic and acidic residues: residues 1402-1416 (EDSR…VRDE) and 1444-1456 (GEEK…KKDI). Lys-1454 is covalently cross-linked (Glycyl lysine isopeptide (Lys-Gly) (interchain with G-Cter in SUMO2)). The span at 1457–1481 (WNSTEQNPLETSRSGCDEVSSTSEI) shows a compositional bias: polar residues. Ser-1468 bears the Phosphoserine mark. Residues Lys-1486 and Lys-1504 each participate in a glycyl lysine isopeptide (Lys-Gly) (interchain with G-Cter in SUMO2) cross-link. Residues 1502-1513 (SIKGSKNSSEIS) show a composition bias toward polar residues. Residues 1502 to 1527 (SIKGSKNSSEISSEPGDDDEPTEGSF) are disordered. WD repeat units lie at residues 1529–1568 (GHQA…GVFE), 1570–1611 (HTSK…CVEQ), 1654–1695 (HGPR…LLRT), 1698–1737 (GHSK…RIYK), 1738–1775 (GHNH…RLQV), and 1778–1815 (GHKD…NYRC). Lys-1585 participates in a covalent cross-link: Glycyl lysine isopeptide (Lys-Gly) (interchain with G-Cter in SUMO2). Lys-1737 participates in a covalent cross-link: Glycyl lysine isopeptide (Lys-Gly) (interchain with G-Cter in SUMO2). The C2H2-type 2; atypical zinc finger occupies 1813–1838 (YRCWWHGCSLIFGVVDHLKQHLLTDH). Residue Lys-1864 forms a Glycyl lysine isopeptide (Lys-Gly) (interchain with G-Cter in SUMO2) linkage.

In terms of assembly, interacts with KNOP1. Interacts with TARDBP and NUP107. Interacts (via N-terminus) with RBM39. Interacts with the SH3 domains of FYN and GRB2. In terms of processing, phosphorylated by FYN in vitro.

Its subcellular location is the nucleus. The protein resides in the nucleolus. It is found in the nucleus speckle. In terms of biological role, RNA-binding protein. Specifically binds to 5'-GGGGCC-3' sequence repeats in RNA. Essential for maintenance of peripheral motor neuron and skeletal muscle function. Required for normal expression and/or alternative splicing of a number of genes in spinal cord and skeletal muscle, including the neurite outgrowth inhibitor RTN4. Also contributes to normal mitochondrial respiratory function in motor neurons, via an unknown mechanism. The protein is Zinc finger protein 106 (ZNF106) of Homo sapiens (Human).